A 477-amino-acid polypeptide reads, in one-letter code: tRNA(Ile)-lysidine synthase (477 aa).

36 to 41 (SGGADS) provides a ligand contact to ATP.

This sequence belongs to the tRNA(Ile)-lysidine synthase family.

The protein resides in the cytoplasm. The catalysed reaction is cytidine(34) in tRNA(Ile2) + L-lysine + ATP = lysidine(34) in tRNA(Ile2) + AMP + diphosphate + H(+). Ligates lysine onto the cytidine present at position 34 of the AUA codon-specific tRNA(Ile) that contains the anticodon CAU, in an ATP-dependent manner. Cytidine is converted to lysidine, thus changing the amino acid specificity of the tRNA from methionine to isoleucine. This is tRNA(Ile)-lysidine synthase from Treponema pallidum (strain Nichols).